The following is a 338-amino-acid chain: 4-hydroxy-3-methylbut-2-enyl diphosphate reductase (338 aa).

[4Fe-4S] cluster is bound at residue Cys-21. Residues His-50 and His-83 each coordinate (2E)-4-hydroxy-3-methylbut-2-enyl diphosphate. 2 residues coordinate dimethylallyl diphosphate: His-50 and His-83. Residues His-50 and His-83 each coordinate isopentenyl diphosphate. Cys-105 contributes to the [4Fe-4S] cluster binding site. His-133 contacts (2E)-4-hydroxy-3-methylbut-2-enyl diphosphate. Residue His-133 coordinates dimethylallyl diphosphate. His-133 is a binding site for isopentenyl diphosphate. The Proton donor role is filled by Glu-135. Residue Thr-173 participates in (2E)-4-hydroxy-3-methylbut-2-enyl diphosphate binding. A [4Fe-4S] cluster-binding site is contributed by Cys-203. Residues Ser-231, Ser-232, Asn-233, and Ser-276 each contribute to the (2E)-4-hydroxy-3-methylbut-2-enyl diphosphate site. Dimethylallyl diphosphate-binding residues include Ser-231, Ser-232, Asn-233, and Ser-276. Residues Ser-231, Ser-232, Asn-233, and Ser-276 each contribute to the isopentenyl diphosphate site.

The protein belongs to the IspH family. [4Fe-4S] cluster serves as cofactor.

The catalysed reaction is isopentenyl diphosphate + 2 oxidized [2Fe-2S]-[ferredoxin] + H2O = (2E)-4-hydroxy-3-methylbut-2-enyl diphosphate + 2 reduced [2Fe-2S]-[ferredoxin] + 2 H(+). The enzyme catalyses dimethylallyl diphosphate + 2 oxidized [2Fe-2S]-[ferredoxin] + H2O = (2E)-4-hydroxy-3-methylbut-2-enyl diphosphate + 2 reduced [2Fe-2S]-[ferredoxin] + 2 H(+). The protein operates within isoprenoid biosynthesis; dimethylallyl diphosphate biosynthesis; dimethylallyl diphosphate from (2E)-4-hydroxy-3-methylbutenyl diphosphate: step 1/1. It functions in the pathway isoprenoid biosynthesis; isopentenyl diphosphate biosynthesis via DXP pathway; isopentenyl diphosphate from 1-deoxy-D-xylulose 5-phosphate: step 6/6. Its function is as follows. Catalyzes the conversion of 1-hydroxy-2-methyl-2-(E)-butenyl 4-diphosphate (HMBPP) into a mixture of isopentenyl diphosphate (IPP) and dimethylallyl diphosphate (DMAPP). Acts in the terminal step of the DOXP/MEP pathway for isoprenoid precursor biosynthesis. The chain is 4-hydroxy-3-methylbut-2-enyl diphosphate reductase from Streptomyces avermitilis (strain ATCC 31267 / DSM 46492 / JCM 5070 / NBRC 14893 / NCIMB 12804 / NRRL 8165 / MA-4680).